The primary structure comprises 76 residues: DNA-directed RNA polymerase subunit Rpo10 (76 aa).

C16, C19, C53, and C54 together coordinate Zn(2+).

The protein belongs to the archaeal Rpo10/eukaryotic RPB10 RNA polymerase subunit family. Part of the RNA polymerase complex. The cofactor is Zn(2+).

The protein resides in the cytoplasm. The enzyme catalyses RNA(n) + a ribonucleoside 5'-triphosphate = RNA(n+1) + diphosphate. Its function is as follows. DNA-dependent RNA polymerase (RNAP) catalyzes the transcription of DNA into RNA using the four ribonucleoside triphosphates as substrates. The sequence is that of DNA-directed RNA polymerase subunit Rpo10 from Archaeoglobus fulgidus (strain ATCC 49558 / DSM 4304 / JCM 9628 / NBRC 100126 / VC-16).